The following is a 415-amino-acid chain: Gamma-glutamyl phosphate reductase (415 aa).

This sequence belongs to the gamma-glutamyl phosphate reductase family.

The protein localises to the cytoplasm. The catalysed reaction is L-glutamate 5-semialdehyde + phosphate + NADP(+) = L-glutamyl 5-phosphate + NADPH + H(+). Its pathway is amino-acid biosynthesis; L-proline biosynthesis; L-glutamate 5-semialdehyde from L-glutamate: step 2/2. Functionally, catalyzes the NADPH-dependent reduction of L-glutamate 5-phosphate into L-glutamate 5-semialdehyde and phosphate. The product spontaneously undergoes cyclization to form 1-pyrroline-5-carboxylate. In Clostridium perfringens (strain 13 / Type A), this protein is Gamma-glutamyl phosphate reductase.